Here is a 268-residue protein sequence, read N- to C-terminus: Trypsin-like protease (268 aa).

A signal peptide spans 1 to 41 (MTHTTTIAAKRGGLALAKKAAAAGAVALAVASLQPVSAAHA). Positions 42 to 45 (ADAR) are cleaved as a propeptide — activation peptide. One can recognise a Peptidase S1 domain in the interval 46-266 (VIGGKPAAQN…FAKDIAKAAS (221 aa)). Cysteines 67 and 83 form a disulfide. Residues His82 and Asp127 each act as charge relay system in the active site. Disulfide bonds link Cys187–Cys202 and Cys213–Cys242. Ser217 serves as the catalytic Charge relay system.

The protein belongs to the peptidase S1 family.

In terms of biological role, protease that shows preferential cleavage after Arg and Lys residues. The polypeptide is Trypsin-like protease (Streptomyces glaucescens).